Reading from the N-terminus, the 93-residue chain is Alpha-defensin 15 (93 aa).

The first 19 residues, 1–19 (MKTLVLLSALVLLAFQVQA), serve as a signal peptide directing secretion. The propeptide occupies 20 to 58 (DPIQNTDEETKTEEQPGEDDQAVSVSFGDPEGSSLQEES). Residues 23 to 56 (QNTDEETKTEEQPGEDDQAVSVSFGDPEGSSLQE) form a disordered region. Intrachain disulfides connect C64-C92, C66-C81, and C71-C91.

The protein belongs to the alpha-defensin family. In terms of tissue distribution, paneth cells of the small bowel.

Its subcellular location is the secreted. Probably contributes to the antimicrobial barrier function of the small bowel mucosa. In Mus musculus (Mouse), this protein is Alpha-defensin 15 (Defa15).